The following is a 271-amino-acid chain: Cyclic AMP-dependent transcription factor ATF-1 (271 aa).

Residues Met1–Arg61 form a disordered region. The 60-residue stretch at Gln31–Ala90 folds into the KID domain. A Phosphoserine; by CaMK1, CDK3, RPS6KA4 and RPS6KA5 modification is found at Ser63. Position 198 is a phosphoserine; by HIPK2 (Ser198). Residues Lys208 and Lys215 each participate in a glycyl lysine isopeptide (Lys-Gly) (interchain with G-Cter in SUMO2) cross-link. The bZIP domain maps to Gln213–Val271. The tract at residues Lys215 to Lys239 is basic motif. Positions Leu241–Leu262 are leucine-zipper.

The protein belongs to the bZIP family. ATF subfamily. In terms of assembly, binds DNA as a dimer. Interacts with HIPK2 and CDK3. Interacts with MOTS-c, a peptide produced by the mitochondrially encoded 12S rRNA MT-RNR1; the interaction occurs in the nucleus following metabolic stress. In terms of processing, phosphorylated at Ser-198 by HIPK2 in response to genotoxic stress. This phosphorylation promotes transcription repression of FTH1 and other antioxidant detoxification genes. The CDK3-mediated phosphorylation at Ser-63 promotes its transactivation and transcriptional activities. Phosphorylated at Ser-63 by RPS6KA4 and RPS6KA5 in response to mitogenic or stress stimuli.

The protein localises to the nucleus. Its function is as follows. This protein binds the cAMP response element (CRE) (consensus: 5'-GTGACGT[AC][AG]-3'), a sequence present in many viral and cellular promoters. Binds to the Tax-responsive element (TRE) of HTLV-I. Mediates PKA-induced stimulation of CRE-reporter genes. Represses the expression of FTH1 and other antioxidant detoxification genes. Triggers cell proliferation and transformation. The polypeptide is Cyclic AMP-dependent transcription factor ATF-1 (ATF1) (Homo sapiens (Human)).